A 104-amino-acid polypeptide reads, in one-letter code: MVRLKEKDGGVVFFVKAQPRSSRSAIIGEYDGKIKISLKAAPVDDAANVECCRFLAKSLGVASSRVRILSGHSSRIKRLTIDGMGAAEAATLFGEHLESVEFDL.

This sequence belongs to the UPF0235 family.

The sequence is that of UPF0235 protein Paes_1868 from Prosthecochloris aestuarii (strain DSM 271 / SK 413).